Consider the following 61-residue polypeptide: Venom protein 22.1 (61 aa).

A signal peptide spans 1 to 18 (MDIKGLLVILFFVLLITG).

The protein belongs to the non-disulfide-bridged peptide (NDBP) superfamily. Long chain multifunctional peptide (group 2) family. In terms of tissue distribution, expressed by the venom gland.

The protein resides in the secreted. The polypeptide is Venom protein 22.1 (Lychas mucronatus (Chinese swimming scorpion)).